The chain runs to 178 residues: Inner membrane-spanning protein YciB (178 aa).

5 helical membrane-spanning segments follow: residues Ile22–Phe42, Ala50–Ser70, Leu72–Ser92, Met121–Leu141, and Phe149–Ile169.

The protein belongs to the YciB family.

The protein resides in the cell inner membrane. Its function is as follows. Plays a role in cell envelope biogenesis, maintenance of cell envelope integrity and membrane homeostasis. The polypeptide is Inner membrane-spanning protein YciB (Photorhabdus laumondii subsp. laumondii (strain DSM 15139 / CIP 105565 / TT01) (Photorhabdus luminescens subsp. laumondii)).